Here is a 254-residue protein sequence, read N- to C-terminus: Alcohol dehydrogenase (254 aa).

An NAD(+)-binding site is contributed by 10-33 (FVAGLGGIGLDTSRELVKRDLKNL). Residue Ser138 coordinates substrate. The active-site Proton acceptor is Tyr151.

Belongs to the short-chain dehydrogenases/reductases (SDR) family. In terms of assembly, homodimer.

The catalysed reaction is a primary alcohol + NAD(+) = an aldehyde + NADH + H(+). The enzyme catalyses a secondary alcohol + NAD(+) = a ketone + NADH + H(+). The sequence is that of Alcohol dehydrogenase (Adh) from Drosophila subobscura (Fruit fly).